A 364-amino-acid chain; its full sequence is UDP-N-acetylglucosamine--N-acetylmuramyl-(pentapeptide) pyrophosphoryl-undecaprenol N-acetylglucosamine transferase (364 aa).

UDP-N-acetyl-alpha-D-glucosamine-binding positions include Thr-10–Gly-12, Asn-124, Arg-166, Ser-196, and Gln-297.

This sequence belongs to the glycosyltransferase 28 family. MurG subfamily.

The protein localises to the cell membrane. It carries out the reaction di-trans,octa-cis-undecaprenyl diphospho-N-acetyl-alpha-D-muramoyl-L-alanyl-D-glutamyl-meso-2,6-diaminopimeloyl-D-alanyl-D-alanine + UDP-N-acetyl-alpha-D-glucosamine = di-trans,octa-cis-undecaprenyl diphospho-[N-acetyl-alpha-D-glucosaminyl-(1-&gt;4)]-N-acetyl-alpha-D-muramoyl-L-alanyl-D-glutamyl-meso-2,6-diaminopimeloyl-D-alanyl-D-alanine + UDP + H(+). It functions in the pathway cell wall biogenesis; peptidoglycan biosynthesis. Its function is as follows. Cell wall formation. Catalyzes the transfer of a GlcNAc subunit on undecaprenyl-pyrophosphoryl-MurNAc-pentapeptide (lipid intermediate I) to form undecaprenyl-pyrophosphoryl-MurNAc-(pentapeptide)GlcNAc (lipid intermediate II). The polypeptide is UDP-N-acetylglucosamine--N-acetylmuramyl-(pentapeptide) pyrophosphoryl-undecaprenol N-acetylglucosamine transferase (Thermoanaerobacter pseudethanolicus (strain ATCC 33223 / 39E) (Clostridium thermohydrosulfuricum)).